A 387-amino-acid polypeptide reads, in one-letter code: Protein NDRG3 (387 aa).

The disordered stretch occupies residues 329–387; the sequence is PSASMTRLVRSRTHSASSSGSMEMPRSRSHTSNAQLQSTSNNSLSNQIQETPHTIELSC. Low complexity predominate over residues 359 to 377; the sequence is TSNAQLQSTSNNSLSNQIQ.

The protein belongs to the NDRG family.

The sequence is that of Protein NDRG3 from Xenopus tropicalis (Western clawed frog).